We begin with the raw amino-acid sequence, 461 residues long: MLEFLSQQKPKILIIGDFMVDNYTWCDCSRISPEAPVLVAKTLKEDKRLGGAANVYANLKSLGADVFALGVVGDDKSGKFLQENLKGEFLIQKGRKTPFKNRIMAHNQQVLRLDEEDISEILLENELIALFDEKIKDFKAVVLSDYAKGILTPKVCKAVIKKAKALNIPVLVDPKGSDFSKYSGATLLTPNKKEALEALKFENLEGENLEKGIKKLKEDFSLRYSIITLSEAGIALFNEGLKIAPAKALEVYDVTGAGDSVIAVLAFCLANEIEIFKACELANEAAAVVVSKIGSVSVSFDEIRSFKSMSFEKKIKNKEELLTLLKQNDKKIVFTNGCFDIVHFGHIKYLEKAKRLGDVLIVGLNSDASVKRLKGESRPVNSEFQRACMLAAFYFVDFVVIFDEDTPLELISFLKPDILVKGADYKDKLVVGSNLISRVELIDFEEGFSTSKIIEKIKDKK.

A ribokinase region spans residues 1–312 (MLEFLSQQKP…IRSFKSMSFE (312 aa)). 191–194 (NKKE) provides a ligand contact to ATP. Asp-259 is an active-site residue. Residues 334-461 (FTNGCFDIVH…KIIEKIKDKK (128 aa)) are cytidylyltransferase.

In the N-terminal section; belongs to the carbohydrate kinase PfkB family. This sequence in the C-terminal section; belongs to the cytidylyltransferase family. As to quaternary structure, homodimer.

It catalyses the reaction D-glycero-beta-D-manno-heptose 7-phosphate + ATP = D-glycero-beta-D-manno-heptose 1,7-bisphosphate + ADP + H(+). It carries out the reaction D-glycero-beta-D-manno-heptose 1-phosphate + ATP + H(+) = ADP-D-glycero-beta-D-manno-heptose + diphosphate. It functions in the pathway nucleotide-sugar biosynthesis; ADP-L-glycero-beta-D-manno-heptose biosynthesis; ADP-L-glycero-beta-D-manno-heptose from D-glycero-beta-D-manno-heptose 7-phosphate: step 1/4. Its pathway is nucleotide-sugar biosynthesis; ADP-L-glycero-beta-D-manno-heptose biosynthesis; ADP-L-glycero-beta-D-manno-heptose from D-glycero-beta-D-manno-heptose 7-phosphate: step 3/4. Functionally, catalyzes the phosphorylation of D-glycero-D-manno-heptose 7-phosphate at the C-1 position to selectively form D-glycero-beta-D-manno-heptose-1,7-bisphosphate. Its function is as follows. Catalyzes the ADP transfer from ATP to D-glycero-beta-D-manno-heptose 1-phosphate, yielding ADP-D-glycero-beta-D-manno-heptose. This chain is Bifunctional protein HldE, found in Campylobacter jejuni (strain RM1221).